The chain runs to 350 residues: Blue-sensitive opsin (350 aa).

The Extracellular portion of the chain corresponds to Met-1–Ala-36. N-linked (GlcNAc...) asparagine glycans are attached at residues Asn-2 and Asn-15. A helical transmembrane segment spans residues Phe-37–Val-61. Over Thr-62–Asn-73 the chain is Cytoplasmic. A helical transmembrane segment spans residues Tyr-74 to Ser-98. The Extracellular portion of the chain corresponds to Met-99–Glu-113. Cys-110 and Cys-187 are joined by a disulfide. The chain crosses the membrane as a helical span at residues Gly-114–Ile-133. At Glu-134–His-152 the chain is on the cytoplasmic side. The helical transmembrane segment at Ala-153 to Ser-176 threads the bilayer. The Extracellular portion of the chain corresponds to Arg-177 to Ser-202. The N-linked (GlcNAc...) asparagine glycan is linked to Asn-200. The helical transmembrane segment at Phe-203–Val-230 threads the bilayer. The Cytoplasmic portion of the chain corresponds to Lys-231–Arg-252. Residues Met-253–Phe-276 traverse the membrane as a helical segment. Topologically, residues Thr-277–Gly-284 are extracellular. The helical transmembrane segment at Pro-285–Met-309 threads the bilayer. At Lys-296 the chain carries N6-(retinylidene)lysine. Residues Asn-310–Ala-350 are Cytoplasmic-facing. The tract at residues Gly-330–Ala-350 is disordered.

Belongs to the G-protein coupled receptor 1 family. Opsin subfamily. Phosphorylated on some or all of the serine and threonine residues present in the C-terminal region. In terms of tissue distribution, rod shaped photoreceptor cells which mediates vision in dim light.

The protein resides in the membrane. In terms of biological role, visual pigments are the light-absorbing molecules that mediate vision. They consist of an apoprotein, opsin, covalently linked to cis-retinal. The polypeptide is Blue-sensitive opsin (Conger conger (Conger eel)).